We begin with the raw amino-acid sequence, 258 residues long: Synapse differentiation-inducing gene protein 1 (258 aa).

Over 1–181 (MDGIIEQKSM…NFLMMPPRDH (181 aa)) the chain is Cytoplasmic. Serine 137 carries the phosphoserine modification. A helical membrane pass occupies residues 182 to 202 (LGLSVFSMLCCFWPLGIAAFY). The Extracellular portion of the chain corresponds to 203–228 (LSHETNKAVAKGDLHQASTSSRRALF). Residues 229–249 (LAVLSITIGTGVYVGVAVALI) constitute an intramembrane region (helical). Residues 250-258 (AYLSKNNHL) lie on the Extracellular side of the membrane.

The protein belongs to the CD225/Dispanin family. In terms of assembly, homodimer. Interacts with GRIA1 and GRIA2.

Its subcellular location is the cell membrane. It localises to the early endosome membrane. The protein resides in the postsynaptic density membrane. It is found in the synapse. The protein localises to the cell projection. Its subcellular location is the dendrite. It localises to the dendritic spine. May regulate AMPA receptor content at nascent synapses, and have a role in postsynaptic development and maturation. The polypeptide is Synapse differentiation-inducing gene protein 1 (SYNDIG1) (Homo sapiens (Human)).